The sequence spans 415 residues: Serine hydroxymethyltransferase (415 aa).

(6S)-5,6,7,8-tetrahydrofolate-binding positions include Leu-117 and 121 to 123; that span reads GHL. Lys-226 bears the N6-(pyridoxal phosphate)lysine mark.

The protein belongs to the SHMT family. As to quaternary structure, homodimer. The cofactor is pyridoxal 5'-phosphate.

The protein resides in the cytoplasm. It carries out the reaction (6R)-5,10-methylene-5,6,7,8-tetrahydrofolate + glycine + H2O = (6S)-5,6,7,8-tetrahydrofolate + L-serine. The protein operates within one-carbon metabolism; tetrahydrofolate interconversion. It participates in amino-acid biosynthesis; glycine biosynthesis; glycine from L-serine: step 1/1. In terms of biological role, catalyzes the reversible interconversion of serine and glycine with tetrahydrofolate (THF) serving as the one-carbon carrier. This reaction serves as the major source of one-carbon groups required for the biosynthesis of purines, thymidylate, methionine, and other important biomolecules. Also exhibits THF-independent aldolase activity toward beta-hydroxyamino acids, producing glycine and aldehydes, via a retro-aldol mechanism. The sequence is that of Serine hydroxymethyltransferase from Dehalococcoides mccartyi (strain CBDB1).